The sequence spans 353 residues: Cyclin-dependent kinase-like 1 (353 aa).

Residues 4-286 enclose the Protein kinase domain; the sequence is YDRLSKLGEG…CSELMLHGIF (283 aa). ATP contacts are provided by residues 10–18 and Lys-33; that span reads LGEGSYGVV. The Proton acceptor role is filled by Asp-126. The interval 331–353 is disordered; the sequence is GGNHGNNNNNGNGINRNFLPTIS. A compositionally biased stretch (low complexity) spans 335–347; that stretch reads GNNNNNGNGINRN.

Belongs to the protein kinase superfamily. Ser/Thr protein kinase family. As to expression, specifically expressed in head and tail ciliated sensory neurons.

It is found in the cell projection. Its subcellular location is the cilium. It catalyses the reaction L-seryl-[protein] + ATP = O-phospho-L-seryl-[protein] + ADP + H(+). The enzyme catalyses L-threonyl-[protein] + ATP = O-phospho-L-threonyl-[protein] + ADP + H(+). In terms of biological role, modulates cilium assembly. The sequence is that of Cyclin-dependent kinase-like 1 from Caenorhabditis elegans.